A 192-amino-acid polypeptide reads, in one-letter code: MRLPGIPDEEFIRVEKIPMTKEEIRVLALSKARLFDGAKFIDIGSGTGSVTVEAGLVVGEKGKVWAIEKDKDAVELTKKNVEKFKLNNVVIIEGEAPEALDHVDSEVDAIFIGGTERLEEILLSSDKKLKNGGRIVIDAILLETVNKALSTLNQMGYKTDVIEVIIAKGMKTSKGYAMISRNPIFIVYGEKP.

Residues threonine 20, 44–48, glutamate 68, and alanine 96 contribute to the S-adenosyl-L-methionine site; that span reads GSGTG.

Belongs to the methyltransferase superfamily. Archaeal-type CbiT family.

It carries out the reaction Co-precorrin-6B + S-adenosyl-L-methionine = Co-precorrin-7 + S-adenosyl-L-homocysteine + CO2. It functions in the pathway cofactor biosynthesis; adenosylcobalamin biosynthesis; cob(II)yrinate a,c-diamide from sirohydrochlorin (anaerobic route): step 8/10. Catalyzes the methylation of C-15 in cobalt-precorrin-6B followed by the decarboxylation of C-12 to form cobalt-precorrin-7. The sequence is that of Probable cobalt-precorrin-6B C(15)-methyltransferase (decarboxylating) from Sulfurisphaera tokodaii (strain DSM 16993 / JCM 10545 / NBRC 100140 / 7) (Sulfolobus tokodaii).